We begin with the raw amino-acid sequence, 247 residues long: tRNA pseudouridine synthase A (247 aa).

Catalysis depends on D58, which acts as the Nucleophile. Residue Y116 participates in substrate binding.

This sequence belongs to the tRNA pseudouridine synthase TruA family. In terms of assembly, homodimer.

The catalysed reaction is uridine(38/39/40) in tRNA = pseudouridine(38/39/40) in tRNA. Functionally, formation of pseudouridine at positions 38, 39 and 40 in the anticodon stem and loop of transfer RNAs. This Hydrogenobaculum sp. (strain Y04AAS1) protein is tRNA pseudouridine synthase A.